We begin with the raw amino-acid sequence, 131 residues long: Putative superoxide reductase (131 aa).

Residues glutamate 15, histidine 17, histidine 45, histidine 51, cysteine 115, and histidine 118 each coordinate Fe cation.

This sequence belongs to the desulfoferrodoxin family. Requires Fe cation as cofactor.

The enzyme catalyses reduced [rubredoxin] + superoxide + 2 H(+) = oxidized [rubredoxin] + H2O2. Functionally, uses electrons from reduced NADP, by way of rubredoxin and an oxidoreductase, to catalyze the reduction of superoxide to hydrogen peroxide. The polypeptide is Putative superoxide reductase (Thermotoga maritima (strain ATCC 43589 / DSM 3109 / JCM 10099 / NBRC 100826 / MSB8)).